The primary structure comprises 363 residues: Holliday junction branch migration complex subunit RuvB (363 aa).

The tract at residues 1-44 (MAIKRNQGHGLPPKRDPALGRDALTTSQALPEDQEQSANEDRIR) is disordered. The segment at 13–204 (PKRDPALGRD…FGLIQRLRFY (192 aa)) is large ATPase domain (RuvB-L). The ATP site is built by Ile43, Arg44, Gly85, Lys88, Thr89, Thr90, Arg194, Tyr204, and Arg241. Thr89 is a Mg(2+) binding site. The segment at 205 to 275 (EVDELIAIVH…VAATALDLYN (71 aa)) is small ATPAse domain (RuvB-S). The interval 278–363 (ALGLDWTDRL…EQSTQLDFLP (86 aa)) is head domain (RuvB-H). Residues Arg333 and Arg338 each contribute to the DNA site.

This sequence belongs to the RuvB family. As to quaternary structure, homohexamer. Forms an RuvA(8)-RuvB(12)-Holliday junction (HJ) complex. HJ DNA is sandwiched between 2 RuvA tetramers; dsDNA enters through RuvA and exits via RuvB. An RuvB hexamer assembles on each DNA strand where it exits the tetramer. Each RuvB hexamer is contacted by two RuvA subunits (via domain III) on 2 adjacent RuvB subunits; this complex drives branch migration. In the full resolvosome a probable DNA-RuvA(4)-RuvB(12)-RuvC(2) complex forms which resolves the HJ.

The protein resides in the cytoplasm. It carries out the reaction ATP + H2O = ADP + phosphate + H(+). In terms of biological role, the RuvA-RuvB-RuvC complex processes Holliday junction (HJ) DNA during genetic recombination and DNA repair, while the RuvA-RuvB complex plays an important role in the rescue of blocked DNA replication forks via replication fork reversal (RFR). RuvA specifically binds to HJ cruciform DNA, conferring on it an open structure. The RuvB hexamer acts as an ATP-dependent pump, pulling dsDNA into and through the RuvAB complex. RuvB forms 2 homohexamers on either side of HJ DNA bound by 1 or 2 RuvA tetramers; 4 subunits per hexamer contact DNA at a time. Coordinated motions by a converter formed by DNA-disengaged RuvB subunits stimulates ATP hydrolysis and nucleotide exchange. Immobilization of the converter enables RuvB to convert the ATP-contained energy into a lever motion, pulling 2 nucleotides of DNA out of the RuvA tetramer per ATP hydrolyzed, thus driving DNA branch migration. The RuvB motors rotate together with the DNA substrate, which together with the progressing nucleotide cycle form the mechanistic basis for DNA recombination by continuous HJ branch migration. Branch migration allows RuvC to scan DNA until it finds its consensus sequence, where it cleaves and resolves cruciform DNA. The protein is Holliday junction branch migration complex subunit RuvB of Picosynechococcus sp. (strain ATCC 27264 / PCC 7002 / PR-6) (Agmenellum quadruplicatum).